The chain runs to 85 residues: Small ribosomal subunit protein bS20 (85 aa).

Belongs to the bacterial ribosomal protein bS20 family.

Binds directly to 16S ribosomal RNA. The chain is Small ribosomal subunit protein bS20 from Borrelia garinii subsp. bavariensis (strain ATCC BAA-2496 / DSM 23469 / PBi) (Borreliella bavariensis).